Reading from the N-terminus, the 37-residue chain is U12-myrmicitoxin-Mri1a (37 aa).

Positions 1–23 (MKTIELITIFAMITTLMVTVVAG) are cleaved as a signal peptide. A propeptide spanning residues 24-25 (DP) is cleaved from the precursor. Residue Val-35 is modified to Valine amide.

As to expression, expressed by the venom gland.

The protein localises to the secreted. Functionally, toxin that induces mild paralysis, and reduces survival and reproduction when injected into aphids (A.pisum). May affect various processes in the aphid, including wound healing and hemolymph coagulation. It does not increase the sensitivity of the aphids to the chemical insecticides imidacloprid, methomyl and Spirotetramat. Has no insecticidal activity when injected into blowfly (L.caesar). Does not display any antibacterial or antifungal activity. The polypeptide is U12-myrmicitoxin-Mri1a (Manica rubida (European giant red ant)).